The following is a 77-amino-acid chain: Acyl carrier protein (77 aa).

The region spanning 1–76 (MAVFEDVRDV…DVVNYIEKLG (76 aa)) is the Carrier domain. Serine 36 is modified (O-(pantetheine 4'-phosphoryl)serine).

This sequence belongs to the acyl carrier protein (ACP) family. In terms of processing, 4'-phosphopantetheine is transferred from CoA to a specific serine of apo-ACP by AcpS. This modification is essential for activity because fatty acids are bound in thioester linkage to the sulfhydryl of the prosthetic group.

Its subcellular location is the cytoplasm. Its pathway is lipid metabolism; fatty acid biosynthesis. Its function is as follows. Carrier of the growing fatty acid chain in fatty acid biosynthesis. The chain is Acyl carrier protein from Campylobacter concisus (strain 13826).